The primary structure comprises 235 residues: Transcriptional regulatory protein WalR (235 aa).

One can recognise a Response regulatory domain in the interval 4–117; it reads KILVVDDEKP…ELLARVKANL (114 aa). The residue at position 53 (D53) is a 4-aspartylphosphate. A DNA-binding region (ompR/PhoB-type) is located at residues 132–231; sequence SNEIHIGSLV…RRGVGYYLRN (100 aa).

Homodimer. In terms of processing, phosphorylated by WalK.

The protein localises to the cytoplasm. Functionally, member of the two-component regulatory system WalK/WalR involved in the regulation of the ftsAZ operon, the yocH, ykvT, cwlO, lytE, ydjM, yjeA, yoeB genes and the tagAB and tagDEF operons. Binds to the ftsAZ P1 promoter sequence in vitro. WalR has been shown to directly bind to the regulatory regions of yocH, ykvT, tagAB/tagDEF. Activates cwlO, lytE and ydjM and represses yoeB and yjeA. This chain is Transcriptional regulatory protein WalR, found in Bacillus subtilis (strain 168).